Consider the following 359-residue polypeptide: MQILADLLNTIPAINSAAMSRAQRHVDGLLKPVGSLGKLEALAIQLAGMPGLNGIPHVGKKAVLVMCADHGVWEEGVAISPKEVTAIQAENMTRGTTGVCVLAAQAGANVHVIDVGIDTAEPIPGLINMRVARGSGNIASAPAMSRRQAEKLLLDVICYTRELAKNGVTLFGVGELGMANTTPAAAIVSTITGRDPEEVVGIGANLPTDKLANKIDVVRRAITLNQPNPQDGVDVLAKVGGFDLVGIAGVMLGAASCGLPVLLDGFLSYAAALAACQMSPAIKPYLIPSHLSAEKGARIALSHLGLEPYLNMDMRLGEGSGAALAMSIIEAACAIYNNMGELAASNIVLPGNTTSDLNS.

Glu318 functions as the Proton acceptor in the catalytic mechanism.

It belongs to the CobT family. Homodimer.

It catalyses the reaction 5,6-dimethylbenzimidazole + nicotinate beta-D-ribonucleotide = alpha-ribazole 5'-phosphate + nicotinate + H(+). It participates in nucleoside biosynthesis; alpha-ribazole biosynthesis; alpha-ribazole from 5,6-dimethylbenzimidazole: step 1/2. Catalyzes the synthesis of alpha-ribazole-5'-phosphate from nicotinate mononucleotide (NAMN) and 5,6-dimethylbenzimidazole (DMB). This is Nicotinate-nucleotide--dimethylbenzimidazole phosphoribosyltransferase from Escherichia coli (strain UTI89 / UPEC).